The primary structure comprises 221 residues: Vesicle transport v-SNARE 13 (221 aa).

Residues 1–198 (MSQGFERYER…MTRRMNRNKW (198 aa)) lie on the Cytoplasmic side of the membrane. Residues 32–93 (EQKKQNLSEI…FKTEVKRITS (62 aa)) adopt a coiled-coil conformation. A helical; Anchor for type IV membrane protein membrane pass occupies residues 199–219 (TIGAIITVLVLAIIFILYFKL). The Vesicular segment spans residues 220-221 (TR).

This sequence belongs to the VTI1 family. Forms SNARE complexes with t-SNAREs. Expressed at low levels in roots, stems, flowers and leaves.

The protein localises to the vacuole membrane. The protein resides in the prevacuolar compartment membrane. Its subcellular location is the endosome membrane. It is found in the early endosome membrane. Functionally, may function as a v-SNARE responsible for targeting vesicles involved in the secretory pathway. Involved in actin-dependent endosomal trafficking pathways associated with the vacuole within root hairs and root tip epidermal cells. Essential for cell wall organization and polarized root hair growth. Also required for the localization of SYP41 to the trans-Golgi network in root hair cells. The chain is Vesicle transport v-SNARE 13 from Arabidopsis thaliana (Mouse-ear cress).